The chain runs to 157 residues: MNIKLIAIGKTDNKSLQTLIDDYTKRLSFYIKFDLEIIPDIKNVKNLSESQQKEKEGELILSKLSATDQLILLDENGKTFSSVGFSEELQKKMNSGVKTLVFVIGGPYGFSETIYKKAQGKVSLSLMTFSHQMVRLFFIEQLYRGFTILRNEPYHHQ.

Residues Leu73, Gly105, and 124–129 (LSLMTF) contribute to the S-adenosyl-L-methionine site.

Belongs to the RNA methyltransferase RlmH family. In terms of assembly, homodimer.

Its subcellular location is the cytoplasm. It catalyses the reaction pseudouridine(1915) in 23S rRNA + S-adenosyl-L-methionine = N(3)-methylpseudouridine(1915) in 23S rRNA + S-adenosyl-L-homocysteine + H(+). Specifically methylates the pseudouridine at position 1915 (m3Psi1915) in 23S rRNA. The protein is Ribosomal RNA large subunit methyltransferase H of Flavobacterium johnsoniae (strain ATCC 17061 / DSM 2064 / JCM 8514 / BCRC 14874 / CCUG 350202 / NBRC 14942 / NCIMB 11054 / UW101) (Cytophaga johnsonae).